A 764-amino-acid chain; its full sequence is Probable cyclic nucleotide-gated ion channel 20, chloroplastic (764 aa).

A chloroplast-targeting transit peptide spans 1 to 25 (MASHNENDDIPMLPISDPSSRTRAR). Positions 1–40 (MASHNENDDIPMLPISDPSSRTRARAFTSRSRSVSLSNPT) are disordered. Low complexity predominate over residues 19–33 (SSRTRARAFTSRSRS). The Stromal segment spans residues 26–204 (AFTSRSRSVS…PHAKEVQTWT (179 aa)). Residues 205 to 225 (KFFALSCLLAIFIDPLFFFLI) traverse the membrane as a helical segment. Residues 226-242 (KVQEQNKCIMIDWPMTK) lie on the Lumenal side of the membrane. A helical transmembrane segment spans residues 243 to 263 (AFVAVRSVTDVIFTMNILLQF). Residues 264-295 (RLAYVARESTVVGAGQLVSHPKKIALHYLKGK) lie on the Stromal side of the membrane. A helical transmembrane segment spans residues 296-316 (FFLDLFIVMPLPQILILWIIP). Over 317–329 (AHLGASGANYAKN) the chain is Lumenal. The chain crosses the membrane as a helical span at residues 330–350 (LLRAAVLFQYIPKLYRLLPFL). The Stromal portion of the chain corresponds to 351–366 (AGQTPTGFIFESAWAN). Residues 367 to 387 (FVINLLTFMLAGHVVGSCWYL) form a helical membrane-spanning segment. The Lumenal portion of the chain corresponds to 388–488 (FGLQRVNQCL…GNQVPSYFLG (101 aa)). Residues 489 to 509 (EVFFTMGIIGLGLLLFALLIG) form a helical membrane-spanning segment. Residues 510–764 (NMQNFLQALG…LCTPQSSYSL (255 aa)) are Stromal-facing. Residues 593-710 (IFSL…EDVT) and Glu658 contribute to the a nucleoside 3',5'-cyclic phosphate site. The calmodulin-binding stretch occupies residues 713–729 (FSRFLRSHRVQGAIRYD). The 30-residue stretch at 734–763 (RLRAARQIQVAWRYRRRRLHRLCTPQSSYS) folds into the IQ domain.

This sequence belongs to the cyclic nucleotide-gated cation channel (TC 1.A.1.5) family. Homotetramer or heterotetramer.

The protein resides in the plastid. It localises to the chloroplast thylakoid membrane. In terms of biological role, probable cyclic nucleotide-gated ion channel. The polypeptide is Probable cyclic nucleotide-gated ion channel 20, chloroplastic (CNGC20) (Arabidopsis thaliana (Mouse-ear cress)).